The following is a 208-amino-acid chain: dITP/XTP pyrophosphatase (208 aa).

11-16 (TGNAKK) provides a ligand contact to substrate. Asp73 (proton acceptor) is an active-site residue. Mg(2+) is bound at residue Asp73. Residues Ser74, 157–160 (FGYD), Lys180, and 185–186 (HR) each bind substrate.

Belongs to the HAM1 NTPase family. In terms of assembly, homodimer. It depends on Mg(2+) as a cofactor.

It carries out the reaction XTP + H2O = XMP + diphosphate + H(+). The enzyme catalyses dITP + H2O = dIMP + diphosphate + H(+). It catalyses the reaction ITP + H2O = IMP + diphosphate + H(+). Pyrophosphatase that catalyzes the hydrolysis of nucleoside triphosphates to their monophosphate derivatives, with a high preference for the non-canonical purine nucleotides XTP (xanthosine triphosphate), dITP (deoxyinosine triphosphate) and ITP. Seems to function as a house-cleaning enzyme that removes non-canonical purine nucleotides from the nucleotide pool, thus preventing their incorporation into DNA/RNA and avoiding chromosomal lesions. This Rhodopirellula baltica (strain DSM 10527 / NCIMB 13988 / SH1) protein is dITP/XTP pyrophosphatase.